A 253-amino-acid chain; its full sequence is tRNA 2'-phosphotransferase 1 (253 aa).

Methionine 1 bears the N-acetylmethionine mark. Disordered regions lie at residues 1-29 and 225-253; these read MNFSGGGRQEAAGSRGRRAPRPREQDRDV and KPLSLAGDEETECQSSPKHSSRERRRIQQ. Serine 240 is modified (phosphoserine). Positions 243 to 253 are enriched in basic residues; sequence HSSRERRRIQQ.

It belongs to the KptA/TPT1 family. In terms of tissue distribution, widely expressed. Weakly or not expressed in lung, spleen, small intestine and peripheral blood leukocytes.

The catalysed reaction is 2'-phospho-[ligated tRNA] + NAD(+) = mature tRNA + ADP-alpha-D-ribose 1'',2''-cyclic phosphate + nicotinamide. Catalyzes the last step of tRNA splicing, the transfer of the splice junction 2'-phosphate from ligated tRNA to NAD to produce ADP-ribose 1''-2'' cyclic phosphate. The protein is tRNA 2'-phosphotransferase 1 (TRPT1) of Homo sapiens (Human).